A 174-amino-acid polypeptide reads, in one-letter code: Probasin (174 aa).

An N-terminal signal peptide occupies residues 1–18 (MMRVIILLLTLHVLGVSS). A disulfide bridge connects residues cysteine 77 and cysteine 168.

This sequence belongs to the calycin superfamily. Lipocalin family.

It is found in the secreted. This Mus musculus (Mouse) protein is Probasin (Pbsn).